Here is a 487-residue protein sequence, read N- to C-terminus: Glutamyl-tRNA(Gln) amidotransferase subunit A (487 aa).

Catalysis depends on charge relay system residues K77 and S152. The active-site Acyl-ester intermediate is the S176.

It belongs to the amidase family. GatA subfamily. In terms of assembly, heterotrimer of A, B and C subunits.

The catalysed reaction is L-glutamyl-tRNA(Gln) + L-glutamine + ATP + H2O = L-glutaminyl-tRNA(Gln) + L-glutamate + ADP + phosphate + H(+). In terms of biological role, allows the formation of correctly charged Gln-tRNA(Gln) through the transamidation of misacylated Glu-tRNA(Gln) in organisms which lack glutaminyl-tRNA synthetase. The reaction takes place in the presence of glutamine and ATP through an activated gamma-phospho-Glu-tRNA(Gln). This Lysinibacillus sphaericus (strain C3-41) protein is Glutamyl-tRNA(Gln) amidotransferase subunit A.